The primary structure comprises 216 residues: Sugar fermentation stimulation protein homolog (216 aa).

This sequence belongs to the SfsA family.

This Thermoplasma volcanium (strain ATCC 51530 / DSM 4299 / JCM 9571 / NBRC 15438 / GSS1) protein is Sugar fermentation stimulation protein homolog.